The following is a 209-amino-acid chain: Glycerol-3-phosphate acyltransferase (209 aa).

5 consecutive transmembrane segments (helical) span residues 8 to 28 (NVLF…YILA), 78 to 98 (VLVL…LIGI), 124 to 144 (VLLV…LIVA), 149 to 169 (ISSL…FIVH), and 170 to 190 (PDMP…IIFY).

Belongs to the PlsY family. As to quaternary structure, probably interacts with PlsX.

The protein localises to the cell inner membrane. The catalysed reaction is an acyl phosphate + sn-glycerol 3-phosphate = a 1-acyl-sn-glycero-3-phosphate + phosphate. Its pathway is lipid metabolism; phospholipid metabolism. In terms of biological role, catalyzes the transfer of an acyl group from acyl-phosphate (acyl-PO(4)) to glycerol-3-phosphate (G3P) to form lysophosphatidic acid (LPA). This enzyme utilizes acyl-phosphate as fatty acyl donor, but not acyl-CoA or acyl-ACP. The sequence is that of Glycerol-3-phosphate acyltransferase from Nitratiruptor sp. (strain SB155-2).